A 652-amino-acid chain; its full sequence is DNA ligase (652 aa).

NAD(+) contacts are provided by residues 29–33 (DSDYD), 78–79 (SL), and glutamate 107. The active-site N6-AMP-lysine intermediate is lysine 109. The NAD(+) site is built by arginine 130, glutamate 164, lysine 278, and lysine 302. Zn(2+)-binding residues include cysteine 395, cysteine 398, cysteine 413, and cysteine 418. Residues 577-652 (NSDAALFGLT…IEDEDWLRKL (76 aa)) form the BRCT domain.

This sequence belongs to the NAD-dependent DNA ligase family. LigA subfamily. Requires Mg(2+) as cofactor. Mn(2+) is required as a cofactor.

It catalyses the reaction NAD(+) + (deoxyribonucleotide)n-3'-hydroxyl + 5'-phospho-(deoxyribonucleotide)m = (deoxyribonucleotide)n+m + AMP + beta-nicotinamide D-nucleotide.. Functionally, DNA ligase that catalyzes the formation of phosphodiester linkages between 5'-phosphoryl and 3'-hydroxyl groups in double-stranded DNA using NAD as a coenzyme and as the energy source for the reaction. It is essential for DNA replication and repair of damaged DNA. The sequence is that of DNA ligase from Streptococcus pyogenes serotype M18 (strain MGAS8232).